The chain runs to 122 residues: Large ribosomal subunit protein uL14 (122 aa).

Belongs to the universal ribosomal protein uL14 family. In terms of assembly, part of the 50S ribosomal subunit. Forms a cluster with proteins L3 and L19. In the 70S ribosome, L14 and L19 interact and together make contacts with the 16S rRNA in bridges B5 and B8.

Binds to 23S rRNA. Forms part of two intersubunit bridges in the 70S ribosome. The chain is Large ribosomal subunit protein uL14 from Limosilactobacillus reuteri (strain DSM 20016) (Lactobacillus reuteri).